A 477-amino-acid chain; its full sequence is Dihydrolipoyl dehydrogenase (477 aa).

FAD-binding positions include 41–50 (EKRGALGGTC), Lys-59, Gly-124, and 153–155 (TGS). Cysteines 50 and 55 form a disulfide. Residues 190-197 (GGGVIGLE), Glu-213, Val-248, and Gly-282 each bind NAD(+). Residues Asp-323 and 330 to 333 (MLAH) each bind FAD. His-456 functions as the Proton acceptor in the catalytic mechanism.

It belongs to the class-I pyridine nucleotide-disulfide oxidoreductase family. As to quaternary structure, homodimer. The cofactor is FAD.

The catalysed reaction is N(6)-[(R)-dihydrolipoyl]-L-lysyl-[protein] + NAD(+) = N(6)-[(R)-lipoyl]-L-lysyl-[protein] + NADH + H(+). This chain is Dihydrolipoyl dehydrogenase (LPD), found in Trypanosoma cruzi.